A 325-amino-acid chain; its full sequence is GMP reductase (325 aa).

Catalysis depends on Cys-174, which acts as the Thioimidate intermediate. 203-226 (MIADGGIRTHGDIAKSIRFGASMV) provides a ligand contact to NADP(+).

The protein belongs to the IMPDH/GMPR family. GuaC type 2 subfamily.

It catalyses the reaction IMP + NH4(+) + NADP(+) = GMP + NADPH + 2 H(+). Functionally, catalyzes the irreversible NADPH-dependent deamination of GMP to IMP. It functions in the conversion of nucleobase, nucleoside and nucleotide derivatives of G to A nucleotides, and in maintaining the intracellular balance of A and G nucleotides. In Staphylococcus carnosus (strain TM300), this protein is GMP reductase.